We begin with the raw amino-acid sequence, 377 residues long: Erythronate-4-phosphate dehydrogenase (377 aa).

Substrate is bound by residues S45 and T67. NAD(+) contacts are provided by residues Q127–V128, D147, and T176. R209 is an active-site residue. An NAD(+)-binding site is contributed by D233. Residue E238 is part of the active site. The active-site Proton donor is H255. G258 is a binding site for NAD(+). A substrate-binding site is contributed by Y259.

The protein belongs to the D-isomer specific 2-hydroxyacid dehydrogenase family. PdxB subfamily. In terms of assembly, homodimer.

Its subcellular location is the cytoplasm. It catalyses the reaction 4-phospho-D-erythronate + NAD(+) = (R)-3-hydroxy-2-oxo-4-phosphooxybutanoate + NADH + H(+). The protein operates within cofactor biosynthesis; pyridoxine 5'-phosphate biosynthesis; pyridoxine 5'-phosphate from D-erythrose 4-phosphate: step 2/5. In terms of biological role, catalyzes the oxidation of erythronate-4-phosphate to 3-hydroxy-2-oxo-4-phosphonooxybutanoate. The polypeptide is Erythronate-4-phosphate dehydrogenase (Vibrio vulnificus (strain CMCP6)).